A 78-amino-acid polypeptide reads, in one-letter code: MEFREQVLDLLAEVAENDVVKENPDVEIFEEGIIDSFQTVGLLLEIQNKLGIEVSIMDFDRDEWATPNKIVEALEELK.

A Carrier domain is found at 1 to 78 (MEFREQVLDL…KIVEALEELK (78 aa)). Residue S36 is modified to O-(pantetheine 4'-phosphoryl)serine.

Belongs to the DltC family. Post-translationally, 4'-phosphopantetheine is transferred from CoA to a specific serine of apo-DCP.

It is found in the cytoplasm. It participates in cell wall biogenesis; lipoteichoic acid biosynthesis. Its function is as follows. Carrier protein involved in the D-alanylation of lipoteichoic acid (LTA). The loading of thioester-linked D-alanine onto DltC is catalyzed by D-alanine--D-alanyl carrier protein ligase DltA. The DltC-carried D-alanyl group is further transferred to cell membrane phosphatidylglycerol (PG) by forming an ester bond, probably catalyzed by DltD. D-alanylation of LTA plays an important role in modulating the properties of the cell wall in Gram-positive bacteria, influencing the net charge of the cell wall. The protein is D-alanyl carrier protein of Staphylococcus carnosus (strain TM300).